The chain runs to 240 residues: 4-hydroxy-tetrahydrodipicolinate reductase (240 aa).

NAD(+)-binding positions include 8–13, 78–80, and 102–105; these read GSTGKM, GTT, and SANM. H134 (proton donor/acceptor) is an active-site residue. H135 serves as a coordination point for (S)-2,3,4,5-tetrahydrodipicolinate. Residue K138 is the Proton donor of the active site. 144 to 145 is a (S)-2,3,4,5-tetrahydrodipicolinate binding site; it reads GT.

Belongs to the DapB family.

It is found in the cytoplasm. The enzyme catalyses (S)-2,3,4,5-tetrahydrodipicolinate + NAD(+) + H2O = (2S,4S)-4-hydroxy-2,3,4,5-tetrahydrodipicolinate + NADH + H(+). The catalysed reaction is (S)-2,3,4,5-tetrahydrodipicolinate + NADP(+) + H2O = (2S,4S)-4-hydroxy-2,3,4,5-tetrahydrodipicolinate + NADPH + H(+). It participates in amino-acid biosynthesis; L-lysine biosynthesis via DAP pathway; (S)-tetrahydrodipicolinate from L-aspartate: step 4/4. In terms of biological role, catalyzes the conversion of 4-hydroxy-tetrahydrodipicolinate (HTPA) to tetrahydrodipicolinate. The sequence is that of 4-hydroxy-tetrahydrodipicolinate reductase from Rickettsia canadensis (strain McKiel).